A 98-amino-acid polypeptide reads, in one-letter code: Co-chaperonin GroES (98 aa).

The disordered stretch occupies residues 32 to 56 (NAKEKPQQGEVLAVGPGRRDDEGKR).

Belongs to the GroES chaperonin family. In terms of assembly, heptamer of 7 subunits arranged in a ring. Interacts with the chaperonin GroEL.

The protein localises to the cytoplasm. Functionally, together with the chaperonin GroEL, plays an essential role in assisting protein folding. The GroEL-GroES system forms a nano-cage that allows encapsulation of the non-native substrate proteins and provides a physical environment optimized to promote and accelerate protein folding. GroES binds to the apical surface of the GroEL ring, thereby capping the opening of the GroEL channel. This Bifidobacterium animalis subsp. lactis (strain AD011) protein is Co-chaperonin GroES.